Consider the following 470-residue polypeptide: Glutamate--tRNA ligase 2 (470 aa).

The short motif at 11–21 (PSPTGHLHLGG) is the 'HIGH' region element. The 'KMSKS' region signature appears at 238 to 242 (KLSKR). ATP is bound at residue K241.

The protein belongs to the class-I aminoacyl-tRNA synthetase family. Glutamate--tRNA ligase type 1 subfamily. In terms of assembly, monomer.

It localises to the cytoplasm. The enzyme catalyses tRNA(Glu) + L-glutamate + ATP = L-glutamyl-tRNA(Glu) + AMP + diphosphate. Its function is as follows. Catalyzes the attachment of glutamate to tRNA(Glu) in a two-step reaction: glutamate is first activated by ATP to form Glu-AMP and then transferred to the acceptor end of tRNA(Glu). This chain is Glutamate--tRNA ligase 2, found in Ehrlichia ruminantium (strain Gardel).